We begin with the raw amino-acid sequence, 151 residues long: MKITESGFDIQGVLDLLPHRYPFLLIDRVIETNSKDSLHAIKNVTFNEPMFNGHFPAKPIFPGVLLLEAIAQACGLLGFKITESKKNANDLYLFAGIDNARFKRQVIPGDTVDFFVTFEKERRGIWKFTGRAEVDGDVACTAEIICARREV.

The active site involves histidine 54.

It belongs to the thioester dehydratase family. FabZ subfamily.

The protein localises to the cytoplasm. The catalysed reaction is a (3R)-hydroxyacyl-[ACP] = a (2E)-enoyl-[ACP] + H2O. Functionally, involved in unsaturated fatty acids biosynthesis. Catalyzes the dehydration of short chain beta-hydroxyacyl-ACPs and long chain saturated and unsaturated beta-hydroxyacyl-ACPs. The polypeptide is 3-hydroxyacyl-[acyl-carrier-protein] dehydratase FabZ (Idiomarina loihiensis (strain ATCC BAA-735 / DSM 15497 / L2-TR)).